The primary structure comprises 344 residues: MSAQQTRAPLLRRIAPYGAAGLAAIVGVAIWSGTGSQSGADASRTPANAVAADGASAAVRQAALPASAALPAPLVGSSAPRLPLDSGGHLAKVRAVRDFFDYCLTARSELTAAALDALVAREIAAQLDATPAQPEALDVWRRYRAYLDALEKLPDGGAVDKIDPEALQRALDQRASIAHRTLGDWSQPFFGAEQSQQRYDLARLRIVQDRTLTDAQKAERLAALDQQMPADERAARAPAERQRAALDQIAQLQKSGATPDAVRAQLTQSLGADVAARVVQMQQDDASWQSRYADYAAQRAQIDAAGLSQQDRDAQIAALRQRIFTKPGEAVRAAAFDRSAAGTR.

The chain crosses the membrane as a helical span at residues 13 to 35; the sequence is RIAPYGAAGLAAIVGVAIWSGTG.

This sequence belongs to the lipase chaperone family.

It is found in the cell inner membrane. May be involved in the folding of the extracellular lipase during its passage through the periplasm. This is Lipase chaperone from Burkholderia vietnamiensis (strain G4 / LMG 22486) (Burkholderia cepacia (strain R1808)).